The sequence spans 120 residues: Large ribosomal subunit protein P3 (120 aa).

The segment at 83-120 (GGGGAAASGGAAAEAPKEEKKEEEKEESDDDMGFSLFD) is disordered.

The protein belongs to the eukaryotic ribosomal protein P1/P2 family. In terms of processing, phosphorylated.

Plays an important role in the elongation step of protein synthesis. The chain is Large ribosomal subunit protein P3 (RPP3A) from Zea mays (Maize).